The following is a 156-amino-acid chain: UPF0232 protein BL0636 (156 aa).

The protein belongs to the UPF0232 family.

This is UPF0232 protein BL0636 from Bifidobacterium longum (strain NCC 2705).